The chain runs to 61 residues: Small ribosomal subunit protein uS14B (61 aa).

C24, C27, C40, and C43 together coordinate Zn(2+).

Belongs to the universal ribosomal protein uS14 family. Zinc-binding uS14 subfamily. Part of the 30S ribosomal subunit. Contacts proteins S3 and S10. Requires Zn(2+) as cofactor.

Its function is as follows. Binds 16S rRNA, required for the assembly of 30S particles and may also be responsible for determining the conformation of the 16S rRNA at the A site. In Lactiplantibacillus plantarum (strain ATCC BAA-793 / NCIMB 8826 / WCFS1) (Lactobacillus plantarum), this protein is Small ribosomal subunit protein uS14B.